The sequence spans 192 residues: dCTP deaminase, dUMP-forming (192 aa).

DCTP is bound by residues 101 to 106 (KSSLGR), Asp119, 127 to 129 (TLE), Gln148, Tyr162, and Gln174. Catalysis depends on Glu129, which acts as the Proton donor/acceptor. A disordered region spans residues 165-184 (GAYGNRYQGQRGPTASRSHL). Polar residues predominate over residues 171 to 183 (YQGQRGPTASRSH).

It belongs to the dCTP deaminase family. As to quaternary structure, homotrimer.

It carries out the reaction dCTP + 2 H2O = dUMP + NH4(+) + diphosphate. It participates in pyrimidine metabolism; dUMP biosynthesis; dUMP from dCTP: step 1/1. Functionally, bifunctional enzyme that catalyzes both the deamination of dCTP to dUTP and the hydrolysis of dUTP to dUMP without releasing the toxic dUTP intermediate. The chain is dCTP deaminase, dUMP-forming from Kocuria rhizophila (strain ATCC 9341 / DSM 348 / NBRC 103217 / DC2201).